The chain runs to 547 residues: Chaperonin GroEL (547 aa).

Residues Thr29 to Pro32, Lys50, Asp86 to Thr90, Gly414, Asn478 to Ala480, and Asp494 contribute to the ATP site.

This sequence belongs to the chaperonin (HSP60) family. Forms a cylinder of 14 subunits composed of two heptameric rings stacked back-to-back. Interacts with the co-chaperonin GroES.

The protein resides in the cytoplasm. It carries out the reaction ATP + H2O + a folded polypeptide = ADP + phosphate + an unfolded polypeptide.. Functionally, together with its co-chaperonin GroES, plays an essential role in assisting protein folding. The GroEL-GroES system forms a nano-cage that allows encapsulation of the non-native substrate proteins and provides a physical environment optimized to promote and accelerate protein folding. The chain is Chaperonin GroEL from Saccharophagus degradans (strain 2-40 / ATCC 43961 / DSM 17024).